The chain runs to 90 residues: Small ribosomal subunit protein bS20 (90 aa).

The tract at residues 1 to 28 (MPNTSSASKRLRQNEKRRLLNRATRSNM) is disordered.

It belongs to the bacterial ribosomal protein bS20 family.

In terms of biological role, binds directly to 16S ribosomal RNA. This Rhodopirellula baltica (strain DSM 10527 / NCIMB 13988 / SH1) protein is Small ribosomal subunit protein bS20.